Here is a 535-residue protein sequence, read N- to C-terminus: Probable anion transporter 2, chloroplastic (535 aa).

Residues 1–95 constitute a chloroplast transit peptide; sequence MASIRSCVSV…RERAVAAMCS (95 aa). 12 helical membrane passes run 125 to 145, 160 to 180, 191 to 211, 215 to 235, 254 to 274, 279 to 299, 343 to 363, 381 to 401, 413 to 433, 443 to 463, 483 to 503, and 504 to 524; these read VVAL…VMSV, FLGI…MVGG, VMAG…WAAS, IMLL…FPTM, ISMG…PIIM, LAGT…VWLF, IEMW…FVLL, AAWF…VAGA, VALV…VSLL, VAAV…AGYF, GIGT…VQWL, and GSFQ…TVFY.

This sequence belongs to the major facilitator superfamily. Sodium/anion cotransporter (TC 2.A.1.14) family.

It is found in the plastid. The protein localises to the chloroplast membrane. Probable anion transporter. This is Probable anion transporter 2, chloroplastic (PHT4;2) from Oryza sativa subsp. japonica (Rice).